We begin with the raw amino-acid sequence, 447 residues long: Tubulin beta chain (447 aa).

Positions 11, 69, 138, 142, 143, 144, 204, and 226 each coordinate GTP. Glu69 contributes to the Mg(2+) binding site.

This sequence belongs to the tubulin family. Dimer of alpha and beta chains. A typical microtubule is a hollow water-filled tube with an outer diameter of 25 nm and an inner diameter of 15 nM. Alpha-beta heterodimers associate head-to-tail to form protofilaments running lengthwise along the microtubule wall with the beta-tubulin subunit facing the microtubule plus end conferring a structural polarity. Microtubules usually have 13 protofilaments but different protofilament numbers can be found in some organisms and specialized cells. Requires Mg(2+) as cofactor.

Its subcellular location is the cytoplasm. The protein localises to the cytoskeleton. Functionally, tubulin is the major constituent of microtubules, a cylinder consisting of laterally associated linear protofilaments composed of alpha- and beta-tubulin heterodimers. Microtubules grow by the addition of GTP-tubulin dimers to the microtubule end, where a stabilizing cap forms. Below the cap, tubulin dimers are in GDP-bound state, owing to GTPase activity of alpha-tubulin. The chain is Tubulin beta chain from Trichophyton rubrum (Athlete's foot fungus).